A 252-amino-acid chain; its full sequence is Trans-aconitate 2-methyltransferase (252 aa).

The protein belongs to the methyltransferase superfamily. Tam family.

The protein resides in the cytoplasm. It catalyses the reaction trans-aconitate + S-adenosyl-L-methionine = (E)-3-(methoxycarbonyl)pent-2-enedioate + S-adenosyl-L-homocysteine. In terms of biological role, catalyzes the S-adenosylmethionine monomethyl esterification of trans-aconitate. This Escherichia coli O9:H4 (strain HS) protein is Trans-aconitate 2-methyltransferase.